A 50-amino-acid chain; its full sequence is Protein HokA (50 aa).

The helical transmembrane segment at 7-24 (LLSLIVICFTLLFFTWMI) threads the bilayer.

Belongs to the Hok/Gef family.

The protein resides in the cell inner membrane. Its function is as follows. Toxic component of a type I toxin-antitoxin (TA) system. When overexpressed kills cells within minutes; causes collapse of the transmembrane potential and arrest of respiration. Its toxic effect is probably neutralized by antisense antitoxin RNA SokA. In Escherichia coli (strain K12), this protein is Protein HokA.